An 864-amino-acid polypeptide reads, in one-letter code: Mitochondrial 15S rRNA processing factor CCM1 (864 aa).

A mitochondrion-targeting transit peptide spans 1-76; the sequence is MYMARCGPKN…REFSNTLKER (76 aa). 2 PPR repeats span residues 319–353 and 356–390; these read NKQN…STKH and DICT…NIKP.

The protein belongs to the CCM1 family. Binds to mitochondrial small subunit 15S rRNA.

It is found in the mitochondrion. In terms of biological role, regulates mitochondrial small subunit maturation by controlling 15S rRNA 5'-end processing. Localizes to the 5' precursor of the 15S rRNA in a position that is subsequently occupied by mS47 in the mature yeast mtSSU. Uses structure and sequence-specific RNA recognition, binding to a single-stranded region of the precursor and specifically recognizing bases -6 to -1. The exchange of Ccm1 for mS47 is coupled to the irreversible removal of precursor rRNA that is accompanied by conformational changes of the mitoribosomal proteins uS5m and mS26. These conformational changes signal completion of 5'-end rRNA processing through protection of the mature 5'-end of the 15S rRNA and stabilization of mS47. The removal of the 5' precursor together with the dissociation of Ccm1 may be catalyzed by the 5'-3' exoribonuclease Pet127. Involved in the specific removal of group I introns in mitochondrial encoded transcripts. This is Mitochondrial 15S rRNA processing factor CCM1 (CCM1) from Saccharomyces cerevisiae (strain JAY291) (Baker's yeast).